Consider the following 915-residue polypeptide: DNA (cytosine-5)-methyltransferase 3 (915 aa).

Over residues 1-14 (MAPSSPSSARPTRA) the composition is skewed to low complexity. Disordered regions lie at residues 1-107 (MAPS…AEEQ) and 152-171 (HSNWPKRYERSTAANKPEED). Residues 21–30 (AMAEEIHQNQ) show a composition bias toward basic and acidic residues. The segment covering 42–57 (AKRRRKAASSGKKPKP) has biased composition (basic residues). A compositionally biased stretch (basic and acidic residues) spans 71–80 (KKGETEKTEP). Over residues 81–107 (VVDDVCAEEPDEEELAMGEEEAEAEEQ) the composition is skewed to acidic residues. Positions 188–313 (IVYCLGDDVY…VAYSTFANIS (126 aa)) constitute a BAH domain. Residues 315 to 328 (ENGQSGSETASGIS) show a composition bias toward polar residues. The tract at residues 315-338 (ENGQSGSETASGISSDDAGLETSS) is disordered. In terms of domain architecture, SAM-dependent MTase C5-type spans 345-876 (ATLLDLYSGC…YCLGQAYLGE (532 aa)). The 64-residue stretch at 445-508 (FVVQKLIGIR…EGRKRKILPL (64 aa)) folds into the Chromo domain. Cysteine 521 is a catalytic residue.

This sequence belongs to the class I-like SAM-binding methyltransferase superfamily. C5-methyltransferase family.

The protein resides in the nucleus. It carries out the reaction a 2'-deoxycytidine in DNA + S-adenosyl-L-methionine = a 5-methyl-2'-deoxycytidine in DNA + S-adenosyl-L-homocysteine + H(+). In terms of biological role, may be involved in the CpXpG methylation and in gene silencing. This is DNA (cytosine-5)-methyltransferase 3 (DMT105) from Zea mays (Maize).